The chain runs to 160 residues: MGVTKKPDLSDPVLRAKLAKGMGHNYYGEPAWPNDLLYIFPVVILGTIACTVGLAVLEPSMIGEPANPFATPLEILPEWYFFPVFQILRTVPNKLLGVLLMAAVPAGLLTVPFLENVNKFQNPFRRPVATTIFLIGTAVAIWLGIGAALPIDKSLTLGLS.

The next 3 helical transmembrane spans lie at 36 to 56 (LLYI…GLAV), 95 to 115 (LLGV…PFLE), and 131 to 151 (TIFL…ALPI).

Belongs to the cytochrome b family. PetD subfamily. The 4 large subunits of the cytochrome b6-f complex are cytochrome b6, subunit IV (17 kDa polypeptide, petD), cytochrome f and the Rieske protein, while the 4 small subunits are petG, petL, petM and petN. The complex functions as a dimer.

The protein resides in the plastid. The protein localises to the chloroplast thylakoid membrane. Component of the cytochrome b6-f complex, which mediates electron transfer between photosystem II (PSII) and photosystem I (PSI), cyclic electron flow around PSI, and state transitions. The protein is Cytochrome b6-f complex subunit 4 of Anthoceros angustus (Hornwort).